The sequence spans 926 residues: Protein O-mannosyl-transferase Tmtc3 (926 aa).

The tract at residues 1–26 (MSTNPNPGIHQYAPSTLPREREREGA) is disordered. The Cytoplasmic portion of the chain corresponds to 1-36 (MSTNPNPGIHQYAPSTLPREREREGATNSPQRNLLE). The helical transmembrane segment at 37–57 (FLCICVACIVCYYNSTQCGLV) threads the bilayer. Residues 58 to 114 (FDDISAIRDNKDLRPHTPLINVFLNDFWGTPMRKEQSHKSYRPLTVLTFRFNYLLHA) lie on the Extracellular side of the membrane. The chain crosses the membrane as a helical span at residues 115–135 (LEPFGYHLVNLLLHLSVCLLW). The Cytoplasmic segment spans residues 136-169 (RRVCRLLLRQCAASGSNAISAPSSSSVSQLNTCA). The chain crosses the membrane as a helical span at residues 170 to 190 (FVASLLFAVHPVHTEAVTGVV). The Extracellular segment spans residues 191-192 (GR). A helical transmembrane segment spans residues 193–213 (AELLSSICFLAAFLSYAKSVG). The Cytoplasmic segment spans residues 214-222 (DSGCPRRTN). 2 helical membrane-spanning segments follow: residues 223 to 239 (WLTLFGCFGSCLLASML) and 240 to 259 (CKEQGITIAGICVVYELFVV). Over 260 to 303 (HQLRPLHLCHFVLRLFDERTEQQSPKLANPSGIRRWSSSTLWKR) the chain is Cytoplasmic. A helical transmembrane segment spans residues 304 to 324 (LSFLVGITLTLLVGRVYVMGS). The Extracellular portion of the chain corresponds to 325–345 (QLPIFTRFDNPASAADTPERQ). Residues 346–366 (LTYGYLIYLNCWLLLCPSLLC) traverse the membrane as a helical segment. Topologically, residues 367 to 384 (CDWTMGTVPLLQGFTDSR) are cytoplasmic. A helical transmembrane segment spans residues 385–405 (NITTLLTFLALGAMVAKTCFT). Topologically, residues 406 to 419 (RNLALSRTLIMCLG) are extracellular. The chain crosses the membrane as a helical span at residues 420–440 (WMVLPFLPASNLFFPVGFVVA). Topologically, residues 441-442 (ER) are cytoplasmic. A helical transmembrane segment spans residues 443 to 463 (ILYMPSMGYCLLVAYGFEQLQ). The Extracellular segment spans residues 464 to 926 (RRGSLSWQRF…RPTHKSRKRS (463 aa)). 9 TPR repeats span residues 514–547 (AKLYNNVGHALENEGKFEEALLYFQQAVRIQTDD), 548–581 (IGAHINVGRTFNNLKRYAEAEQAYVQAKALFPQA), 596–630 (LNVFINLANLIAKNQTRLEEADHLYRQAISMRSDY), 631–664 (VQAYINRGDILMKLNRTAQAQEVYEQALLYDNEN), 665–698 (ADIYYNLGVVFLEQGKSQQAQVYFNKAIELYPEH), 736–769 (EKVYFNLGMLAMDESSFDEAEQFFKRAIHLKADF), 770–803 (RSALFNLALLLADTKRPLDAVPFLNQLIRHHPSH), 805–838 (KGLILLGDIYINHMKDLDEAEKCYRSILHYDPHN), and 839–872 (TQGLHNLCVVFVERKRLAKAAACLQYAQRLAPAE). 2 N-linked (GlcNAc...) asparagine glycosylation sites follow: N609 and N645.

The protein belongs to the TMTC family.

It is found in the membrane. Its subcellular location is the endoplasmic reticulum. The enzyme catalyses a di-trans,poly-cis-dolichyl beta-D-mannosyl phosphate + L-seryl-[protein] = 3-O-(alpha-D-mannosyl)-L-seryl-[protein] + a di-trans,poly-cis-dolichyl phosphate + H(+). It carries out the reaction a di-trans,poly-cis-dolichyl beta-D-mannosyl phosphate + L-threonyl-[protein] = 3-O-(alpha-D-mannosyl)-L-threonyl-[protein] + a di-trans,poly-cis-dolichyl phosphate + H(+). Its pathway is protein modification; protein glycosylation. Functionally, transfers mannosyl residues to the hydroxyl group of serine or threonine residues. This chain is Protein O-mannosyl-transferase Tmtc3, found in Drosophila melanogaster (Fruit fly).